The primary structure comprises 188 residues: Ion-translocating oxidoreductase complex subunit B (188 aa).

The hydrophobic stretch occupies residues 1–26; that stretch reads MNGVLLAIGVLLPICLASGALLGYAA. The 4Fe-4S domain maps to 32-90; it reads QGDPVAERVNALLPQTQCGQCGYPGCKPYAEAIAAGDRINKCPPGGEATIQALADLLDL. Residues cysteine 49, cysteine 52, cysteine 57, cysteine 73, cysteine 113, cysteine 116, cysteine 119, cysteine 123, cysteine 143, cysteine 146, cysteine 149, and cysteine 153 each coordinate [4Fe-4S] cluster. 4Fe-4S ferredoxin-type domains follow at residues 104–133 and 134–163; these read RVAY…GAAR and LMHT…MREI.

Belongs to the 4Fe4S bacterial-type ferredoxin family. RnfB subfamily. As to quaternary structure, the complex is composed of six subunits: RnfA, RnfB, RnfC, RnfD, RnfE and RnfG. It depends on [4Fe-4S] cluster as a cofactor.

The protein resides in the cell inner membrane. In terms of biological role, part of a membrane-bound complex that couples electron transfer with translocation of ions across the membrane. This Pseudomonas paraeruginosa (strain DSM 24068 / PA7) (Pseudomonas aeruginosa (strain PA7)) protein is Ion-translocating oxidoreductase complex subunit B.